We begin with the raw amino-acid sequence, 164 residues long: Transcriptional repressor NrdR (164 aa).

Residues 3-34 (CPKCNYNKSSVVDSRQAEDGNTIRRRRECEKC) fold into a zinc finger. In terms of domain architecture, ATP-cone spans 49–139 (LLVVKKDGTR…VYKSFKDVDE (91 aa)).

This sequence belongs to the NrdR family. Zn(2+) is required as a cofactor.

Functionally, negatively regulates transcription of bacterial ribonucleotide reductase nrd genes and operons by binding to NrdR-boxes. The chain is Transcriptional repressor NrdR from Streptococcus uberis (strain ATCC BAA-854 / 0140J).